A 176-amino-acid polypeptide reads, in one-letter code: MKIIAKKDLFINDEIRVREVRLVGLEGEQLGIKPLSEAQSLADAANVDLVLIQPQAVPPVAKLMDYGKFKFEYQKKQKEQRKKQSVVTVKEVRLSPVIDKGDFETKLRNGRKFLEKGNKVKVSIRFKGRMITHKEIGAKVLADFAEATQDIAIIEQRAKMDGRQMFMQLAPISDKK.

Belongs to the IF-3 family. Monomer.

The protein localises to the cytoplasm. Its function is as follows. IF-3 binds to the 30S ribosomal subunit and shifts the equilibrium between 70S ribosomes and their 50S and 30S subunits in favor of the free subunits, thus enhancing the availability of 30S subunits on which protein synthesis initiation begins. The sequence is that of Translation initiation factor IF-3 from Streptococcus equi subsp. zooepidemicus (strain H70).